A 1293-amino-acid chain; its full sequence is Galactose/N-acetyl-D-galactosamine lectin heavy subunit 1 (1293 aa).

The N-terminal stretch at 1 to 15 (MKLLLLNILLLCCLA) is a signal peptide. Residues 16–1234 (DKLNEFSADI…NNVGAIAAAT (1219 aa)) lie on the Extracellular side of the membrane. N-linked (GlcNAc...) asparagine glycans are attached at residues Asn95, Asn198, Asn234, Asn261, Asn337, Asn377, Asn390, Asn468, Asn487, Asn643, Asn659, Asn890, Asn992, Asn1138, Asn1204, and Asn1214. The chain crosses the membrane as a helical span at residues 1235-1255 (TVAVVVVAVVVALIVVSIGLF). Residues 1256–1293 (KTYQLVSSAMKNAITITNENAEYVGADNEATNAATFNG) lie on the Cytoplasmic side of the membrane.

As to quaternary structure, heterodimer composed of a 170 kDa heavy subunit (hgl) and a 31/35 kDa light subunit (lgl); disulfide-linked. Post-translationally, N-glycosylated.

It localises to the cell membrane. Lectin which binds galactose and N-acetyl-D-galactosamine of host glycoproteins and thus mediates adhesion to host cells. Mediates adherence to host colonic mucins, an essential step for pathogenic tissue invasion. The chain is Galactose/N-acetyl-D-galactosamine lectin heavy subunit 1 from Entamoeba histolytica (strain ATCC 30459 / HM-1:IMSS / ABRM).